A 356-amino-acid polypeptide reads, in one-letter code: Dual-specificity RNA methyltransferase RlmN (356 aa).

Catalysis depends on Glu-89, which acts as the Proton acceptor. Residues Ser-108–Asp-341 enclose the Radical SAM core domain. A disulfide bridge connects residues Cys-115 and Cys-346. Positions 122, 126, and 129 each coordinate [4Fe-4S] cluster. Residues Gly-172–Glu-173, Ser-204, Ser-227–His-229, and Asn-303 contribute to the S-adenosyl-L-methionine site. The active-site S-methylcysteine intermediate is Cys-346.

The protein belongs to the radical SAM superfamily. RlmN family. [4Fe-4S] cluster is required as a cofactor.

It localises to the cytoplasm. The enzyme catalyses adenosine(2503) in 23S rRNA + 2 reduced [2Fe-2S]-[ferredoxin] + 2 S-adenosyl-L-methionine = 2-methyladenosine(2503) in 23S rRNA + 5'-deoxyadenosine + L-methionine + 2 oxidized [2Fe-2S]-[ferredoxin] + S-adenosyl-L-homocysteine. The catalysed reaction is adenosine(37) in tRNA + 2 reduced [2Fe-2S]-[ferredoxin] + 2 S-adenosyl-L-methionine = 2-methyladenosine(37) in tRNA + 5'-deoxyadenosine + L-methionine + 2 oxidized [2Fe-2S]-[ferredoxin] + S-adenosyl-L-homocysteine. Functionally, specifically methylates position 2 of adenine 2503 in 23S rRNA and position 2 of adenine 37 in tRNAs. m2A2503 modification seems to play a crucial role in the proofreading step occurring at the peptidyl transferase center and thus would serve to optimize ribosomal fidelity. The chain is Dual-specificity RNA methyltransferase RlmN from Campylobacter jejuni subsp. jejuni serotype O:2 (strain ATCC 700819 / NCTC 11168).